Here is a 324-residue protein sequence, read N- to C-terminus: Tyrosine--tRNA ligase (324 aa).

Tyr36 contributes to the L-tyrosine binding site. A 'HIGH' region motif is present at residues 41 to 49; sequence PSGKVHLGH. Residues Tyr158, Gln162, Asp165, and Gln180 each contribute to the L-tyrosine site. Residues 215 to 219 carry the 'KMSKS' region motif; that stretch reads KMSSS. Residue Ser218 coordinates ATP.

This sequence belongs to the class-I aminoacyl-tRNA synthetase family. TyrS type 3 subfamily. Homodimer.

The protein localises to the cytoplasm. It catalyses the reaction tRNA(Tyr) + L-tyrosine + ATP = L-tyrosyl-tRNA(Tyr) + AMP + diphosphate + H(+). Functionally, catalyzes the attachment of tyrosine to tRNA(Tyr) in a two-step reaction: tyrosine is first activated by ATP to form Tyr-AMP and then transferred to the acceptor end of tRNA(Tyr). This is Tyrosine--tRNA ligase from Methanopyrus kandleri (strain AV19 / DSM 6324 / JCM 9639 / NBRC 100938).